The chain runs to 504 residues: Cytochrome P450 6a9 (504 aa).

Heme is bound at residue cysteine 449.

The protein belongs to the cytochrome P450 family. Heme serves as cofactor.

The protein resides in the endoplasmic reticulum membrane. It is found in the microsome membrane. Its function is as follows. Involved in the metabolism of insect hormones and in the breakdown of synthetic insecticides. In Drosophila melanogaster (Fruit fly), this protein is Cytochrome P450 6a9 (Cyp6a9).